A 318-amino-acid chain; its full sequence is Glutathione synthetase (318 aa).

In terms of domain architecture, ATP-grasp spans 124–310 (EKLFTAWFPE…ITGKLMDAIE (187 aa)). 150-207 (FREQHGDVILKPLDGMGGASIFRVKEGDPNLSVIIETLTNHGQNYCMAQTFVPDISNG) contacts ATP. Positions 281 and 283 each coordinate Mg(2+).

Belongs to the prokaryotic GSH synthase family. Requires Mg(2+) as cofactor. Mn(2+) is required as a cofactor.

It carries out the reaction gamma-L-glutamyl-L-cysteine + glycine + ATP = glutathione + ADP + phosphate + H(+). It functions in the pathway sulfur metabolism; glutathione biosynthesis; glutathione from L-cysteine and L-glutamate: step 2/2. The protein is Glutathione synthetase of Vibrio cholerae serotype O1 (strain ATCC 39315 / El Tor Inaba N16961).